A 250-amino-acid chain; its full sequence is LOB domain-containing protein 37 (250 aa).

In terms of domain architecture, LOB spans 1–107 (MSCNGCRVLR…VETVLRGGSL (107 aa)). A disordered region spans residues 145–227 (DSTDRNIYHH…DSGTTTTTTA (83 aa)). Over residues 157–170 (FSSSRSRSTMDSSS) the composition is skewed to low complexity.

Belongs to the LOB domain-containing protein family. As to expression, expressed in young shoots, roots, stems, leaves and flowers.

The polypeptide is LOB domain-containing protein 37 (LBD37) (Arabidopsis thaliana (Mouse-ear cress)).